Here is a 225-residue protein sequence, read N- to C-terminus: Ribose-5-phosphate isomerase A (225 aa).

Residues 1 to 20 form a disordered region; sequence MKQSGGTEAQKRRAGKQAAD. Substrate contacts are provided by residues 32–35, 86–89, and 98–101; these read TGST, DGAD, and KGGG. Glu-107 (proton acceptor) is an active-site residue. Lys-125 lines the substrate pocket.

It belongs to the ribose 5-phosphate isomerase family. In terms of assembly, homodimer.

It catalyses the reaction aldehydo-D-ribose 5-phosphate = D-ribulose 5-phosphate. The protein operates within carbohydrate degradation; pentose phosphate pathway; D-ribose 5-phosphate from D-ribulose 5-phosphate (non-oxidative stage): step 1/1. Its function is as follows. Catalyzes the reversible conversion of ribose-5-phosphate to ribulose 5-phosphate. This is Ribose-5-phosphate isomerase A from Natronomonas pharaonis (strain ATCC 35678 / DSM 2160 / CIP 103997 / JCM 8858 / NBRC 14720 / NCIMB 2260 / Gabara) (Halobacterium pharaonis).